A 217-amino-acid polypeptide reads, in one-letter code: Proteasome subunit beta type-6-B like protein (217 aa).

Positions 1-16 (MERHFMDSQIKGVSTG) are cleaved as a propeptide — removed in mature form. The active-site Nucleophile is the threonine 17.

It belongs to the peptidase T1B family. In terms of assembly, the 26S proteasome consists of a 20S proteasome core and two 19S regulatory subunits. The 20S proteasome core is composed of 28 subunits that are arranged in four stacked rings, resulting in a barrel-shaped structure. The two end rings are each formed by seven alpha subunits, and the two central rings are each formed by seven beta subunits. The catalytic chamber with the active sites is on the inside of the barrel.

The protein localises to the cytoplasm. The protein resides in the nucleus. It carries out the reaction Cleavage of peptide bonds with very broad specificity.. Functionally, the proteasome is a multicatalytic proteinase complex which is characterized by its ability to cleave peptides with Arg, Phe, Tyr, Leu, and Glu adjacent to the leaving group at neutral or slightly basic pH. The proteasome has an ATP-dependent proteolytic activity. This subunit is involved in antigen processing to generate class I binding peptides. This is Proteasome subunit beta type-6-B like protein (psmb6l-b) from Salmo salar (Atlantic salmon).